The primary structure comprises 821 residues: DNA ligase (821 aa).

NAD(+) contacts are provided by residues 50-54 (DAEYD), 99-100 (SL), and glutamate 140. Lysine 142 acts as the N6-AMP-lysine intermediate in catalysis. Residues arginine 163, glutamate 200, lysine 319, and lysine 343 each coordinate NAD(+). Cysteine 452, cysteine 455, cysteine 470, and cysteine 476 together coordinate Zn(2+). The 80-residue stretch at 742–821 (AAALPLEGKT…AGLQALLAGN (80 aa)) folds into the BRCT domain.

This sequence belongs to the NAD-dependent DNA ligase family. LigA subfamily. Requires Mg(2+) as cofactor. Mn(2+) is required as a cofactor.

It catalyses the reaction NAD(+) + (deoxyribonucleotide)n-3'-hydroxyl + 5'-phospho-(deoxyribonucleotide)m = (deoxyribonucleotide)n+m + AMP + beta-nicotinamide D-nucleotide.. In terms of biological role, DNA ligase that catalyzes the formation of phosphodiester linkages between 5'-phosphoryl and 3'-hydroxyl groups in double-stranded DNA using NAD as a coenzyme and as the energy source for the reaction. It is essential for DNA replication and repair of damaged DNA. In Chromobacterium violaceum (strain ATCC 12472 / DSM 30191 / JCM 1249 / CCUG 213 / NBRC 12614 / NCIMB 9131 / NCTC 9757 / MK), this protein is DNA ligase.